The chain runs to 407 residues: Sensor histidine kinase YdfH (407 aa).

At 1-25 (MLIRNPFKDKYYSHDRRALNMLALR) the chain is on the cytoplasmic side. A run of 2 helical transmembrane segments spans residues 26 to 46 (VPGLAFILMIYIASIVLQFVS) and 47 to 67 (GGWSILLLYAFTILIAIFALL). Topologically, residues 68 to 78 (HWHSYRWVKKR) are cytoplasmic. 2 consecutive transmembrane segments (helical) span residues 79–99 (VILYFAVQGLITFALANLMTG) and 100–120 (FFILVIIGLYAFLIGQIIGMA). At 121–125 (DRRRT) the chain is on the cytoplasmic side. The chain crosses the membrane as a helical span at residues 126 to 146 (FLILYLLLLLVINSAYHLHKG). At 147 to 150 (EVLH) the chain is on the extracellular side. The chain crosses the membrane as a helical span at residues 151-171 (FIVIAAPIMIVIITYAATFFA). Topologically, residues 172 to 407 (QVDEKIKAQL…VPIQGEMQDE (236 aa)) are cytoplasmic. The region spanning 201–402 (ERQRMARDLH…QIEITVPIQG (202 aa)) is the Histidine kinase domain. Residue H210 is modified to Phosphohistidine; by autocatalysis.

The protein resides in the cell membrane. The enzyme catalyses ATP + protein L-histidine = ADP + protein N-phospho-L-histidine.. In terms of biological role, member of the two-component regulatory system YdfH/YdfI. May activate YdfI by phosphorylation. This Bacillus subtilis (strain 168) protein is Sensor histidine kinase YdfH (ydfH).